The sequence spans 2201 residues: MGAQVSTQKTGAHETSLSAAGNSIIHYTNINYYKDAASNSANRQDFTQDPSKFTEPVKDVMIKSLPALNSPTVEECGYSDRVRSITLGNSTITTQECANVVVGYGRWPTYLRDDEATAEDQPTQPDVATCRFYTLDSIKWEKGSVGWWWKFPEALSDMGLFGQNMQYHYLGRAGYTIHLQCNASKFHQGCLLVVCVPEAEMGGAVVGQAFSATAMANGDKAYEFTSATQSDQTKVQTAIHNAGMGVGVGNLTIYPHQWINLRTNNSATIVMPYINSVPMDNMFRHYNFTLMVIPFVKLDYADTASTYVPITVTVAPMCAEYNGLRLAQAQGLPTMNTPGSTQFLTSDDFQSPCALPQFDVTPSMNIPGEVKNLMEIAEVDSVVPVNNVQDTTDQMEMFRIPVTINAPLQQQVFGLRLQPGLDSVFKHTLLGEILNYYAHWSGSMKLTFVFCGSAMATGKFLIAYSPPGANPPKTRKDAMLGTHIIWDIGLQSSCVLCVPWISQTHYRLVQQDEYTSAGYVTCWYQTGMIVPPGTPNSSSIMCFASACNDFSVRMLRDTPFISQDNKLQGDVEEAIERARCTVADTMRTGPSNSASVPALTAVETGHTSQVTPSDTMQTRHVKNYHSRSESTVENFLGRSACVYMEEYKTTDKHVNKKFVAWPINTKQMVQMRRKLEMFTYLRFDMEVTFVITSRQDPGTTLAQDMPVLTRQIMYVPPGGPIPAKVDDYAWQTSTNPSIFWTEGNAPARMSIPFISIGNAYSNFYDGWSNFDQRGSYGYNTLNNLGHIYVRHVSGSSPHPITSTIRVYFKPKHTRAWVPRPPRLCQYKKAFSVDFTPTPITDTRKDINTVTTVAQSRRRGDMSTLNTHGAFGQQSGAVYVGNYRVINRHLATHTDWQNCVWEDYNRDLLVSTTTAHGCDVIARCQCTTGVYFCASKNKHYPVSFEGPGLVEVQESEYYPKRYQSHVLLAAGFSEPGDCGGILRCEHGVIGIVTMGGEGVVGFADVRDLLWLEDDAMEQGVKDYVEQLGNAFGSGFTNQICEQVNLLKESLVGQDSILEKSLKALVKIISALVIVVRNHDDLITVTAILALIGCTSSPWRWLKQKVSQYYGIPMAERQNDSWLKKFTEMTNACKRMEWIAIKIQKFIEWLKVKILPEVREKHEFLNRLKQLPLLESQIATIEQSAPSQSDQEQLFSNVQYFAHYCRKYAPLYAAEAKRVFSLEKKMSNYIQFKSKCRIEPVCLLLHGSPGAGKSVATNLIGRSLAEKLNSSVYSLPPDPDHFDGYKQQAVVIMDDLCQNPDGKDVSLFCQMVSSVDFVPPMAALEEKGILFTSPFVLASTNAGSINAPTVSDSRALARRFHFDMNIEVISMYSQNGKINMPMSVKTCDEECCPVNFKKCCPLVCGKAIQFIDRRTQVRYSLDMLVTEMFREYNHRHSVGATLEALFQGPPIYREIKISVAPETPPPPVIADLLKSVDSEDVREYCKEKGWLIPEVNSTLQIEKYVSRAFICLQAITTFVSVAGIIYIIYKLFAGFQGAYTGIPNQKPKVPTLRQAKVQGPAFEFAVAMMKRNSSTVKTEYGEFTMLGIYDRWAVLPRHAKPGPTILMNDQEVGVMDAKELVDKDGTNLELTLLKLNRNEKFRDIRGFLAKEEMEVNEAVLAINTSKFPNMYIPVGQVTDYGFLNLGGTPTKRMLMYNFPTRAGQCGGVLMSTGKVLGIHVGGNGHQGFSAALLKHYFNDEQGEIEFIESSKDAGFPIINTPSKTKLEPSVFHQVFEGVKEPAVLRNGDPRLKANFEEAIFSKYIGNVNTHVDEYMLEAVDHYAGQLATLDISTEPMKLEDAVYGTEGLEALDLTTSAGYPYVALGIKKRDILSKKTRDLTKLKECMDKYGLNLPMITYVKDQLRSAEKVAKGKSRLIEASSLNDSVAMRQTFGNLYKTFHLNPGIVTGSAVGCDPDLFWSKIPVMLNGHLIAFDYSGYDASLSPVWFACLKLLLEKLGYSHKETNYIDYLCNSHHLYRDKHYFVRGGMPSGCSGTSIFNSMINNIIIRTLMLKVYKGIDLDQFRMIAYGDDVIASYPWPIDASLLAEAGKDYGLIMTPADKGECFNEVTWTNVTFLKRYFRADEQYPFLVHPVMPMKDIHESIRWTKDPKNTQDHVRSLCLLAWHNGEHEYEEFIRKIRSVPVGRCLTLPAFSTLRRKWLDSF.

Gly2 carries N-myristoyl glycine; by host lipidation. Over Gly2–Gln1511 the chain is Cytoplasmic. Residues Lys566–Val582 form an amphipathic alpha-helix region. Residues Arg858–Asp860 carry the Cell attachment site motif. Residues His888 and Asp906 each act as for protease 2A activity in the active site. Zn(2+) is bound by residues Cys923 and Cys925. The active-site For protease 2A activity is the Cys977. The Zn(2+) site is built by Cys983 and His985. A membrane-binding region spans residues Asn1117 to Gln1189. The segment at Asn1117–Thr1255 is oligomerization. The RNA-binding stretch occupies residues Ala1138 to Gln1142. The 157-residue stretch at Glu1221–Asn1377 folds into the SF3 helicase domain. Zn(2+)-binding residues include Cys1385, Cys1397, and Cys1402. Residues Cys1385–Cys1402 form a C4-type; degenerate zinc finger. Positions Glu1429–Val1436 are RNA-binding. Residues Leu1440–Gln1445 are oligomerization. The stretch at Ala1512–Tyr1527 is an intramembrane region. Residues Lys1528–Phe2201 are Cytoplasmic-facing. Tyr1537 carries the O-(5'-phospho-RNA)-tyrosine modification. The region spanning Gly1557 to Phe1735 is the Peptidase C3 domain. Active-site for protease 3C activity residues include His1596, Glu1627, and Cys1703. Positions Gly1966 to Leu2082 constitute a RdRp catalytic domain. Positions 1972 and 2068 each coordinate Mg(2+).

This sequence belongs to the picornaviruses polyprotein family. Interacts with capsid protein VP1 and capsid protein VP3 to form heterotrimeric protomers. In terms of assembly, interacts with capsid protein VP0, and capsid protein VP3 to form heterotrimeric protomers. Five protomers subsequently associate to form pentamers which serve as building blocks for the capsid. Interacts with capsid protein VP2, capsid protein VP3 and capsid protein VP4 following cleavage of capsid protein VP0. Interacts with host integrin heterodimer ITGAV/ITGB6. As to quaternary structure, interacts with capsid protein VP1 and capsid protein VP3 in the mature capsid. Interacts with capsid protein VP0 and capsid protein VP1 to form heterotrimeric protomers. Five protomers subsequently associate to form pentamers which serve as building blocks for the capsid. Interacts with capsid protein VP4 in the mature capsid. Interacts with protein 2C; this interaction may be important for virion morphogenesis. In terms of assembly, interacts with capsid protein VP1 and capsid protein VP3. As to quaternary structure, homodimer. Homohexamer; forms a hexameric ring structure with 6-fold symmetry characteristic of AAA+ ATPases. Interacts (via N-terminus) with host RTN3 (via reticulon domain); this interaction is important for viral replication. Interacts with capsid protein VP3; this interaction may be important for virion morphogenesis. In terms of assembly, interacts with protein 3CD. As to quaternary structure, homodimer. Interacts with host GBF1. Interacts (via GOLD domain) with host ACBD3 (via GOLD domain); this interaction allows the formation of a viral protein 3A/ACBD3 heterotetramer with a 2:2 stoichiometry, which will stimulate the recruitment of host PI4KB in order to synthesize PI4P at the viral RNA replication sites. Interacts with RNA-directed RNA polymerase. In terms of assembly, interacts with protein 3AB and with RNA-directed RNA polymerase. As to quaternary structure, interacts with Viral protein genome-linked and with protein 3CD. Requires Mg(2+) as cofactor. In terms of processing, specific enzymatic cleavages in vivo by the viral proteases yield processing intermediates and the mature proteins. Post-translationally, myristoylation is required for the formation of pentamers during virus assembly. Further assembly of 12 pentamers and a molecule of genomic RNA generates the provirion. During virion maturation, immature virions are rendered infectious following cleavage of VP0 into VP4 and VP2. This maturation seems to be an autocatalytic event triggered by the presence of RNA in the capsid and it is followed by a conformational change infectious virion. In terms of processing, myristoylation is required during RNA encapsidation and formation of the mature virus particle. Post-translationally, VPg is uridylylated by the polymerase into VPg-pUpU. This acts as a nucleotide-peptide primer for the genomic RNA replication.

It is found in the virion. It localises to the host cytoplasm. The protein resides in the host cytoplasmic vesicle membrane. Its subcellular location is the host nucleus. It catalyses the reaction a ribonucleoside 5'-triphosphate + H2O = a ribonucleoside 5'-diphosphate + phosphate + H(+). It carries out the reaction Selective cleavage of Tyr-|-Gly bond in the picornavirus polyprotein.. The enzyme catalyses RNA(n) + a ribonucleoside 5'-triphosphate = RNA(n+1) + diphosphate. The catalysed reaction is Selective cleavage of Gln-|-Gly bond in the poliovirus polyprotein. In other picornavirus reactions Glu may be substituted for Gln, and Ser or Thr for Gly.. Replication or transcription is subject to high level of random mutations by the nucleotide analog ribavirin. In terms of biological role, forms an icosahedral capsid of pseudo T=3 symmetry with capsid proteins VP2 and VP3. The capsid is 300 Angstroms in diameter, composed of 60 copies of each capsid protein and enclosing the viral positive strand RNA genome. Capsid protein VP1 mainly forms the vertices of the capsid. Capsid protein VP1 interacts with host integrin ITGAV/ITGB6 to provide virion attachment to target host cells. This attachment induces virion internalization. Tyrosine kinases are probably involved in the entry process. After binding to its receptor, the capsid undergoes conformational changes. Capsid protein VP1 N-terminus (that contains an amphipathic alpha-helix) and capsid protein VP4 are externalized. Together, they shape a pore in the host membrane through which viral genome is translocated to host cell cytoplasm. Functionally, forms an icosahedral capsid of pseudo T=3 symmetry with capsid proteins VP2 and VP3. The capsid is 300 Angstroms in diameter, composed of 60 copies of each capsid protein and enclosing the viral positive strand RNA genome. Its function is as follows. Lies on the inner surface of the capsid shell. After binding to the host receptor, the capsid undergoes conformational changes. Capsid protein VP4 is released, Capsid protein VP1 N-terminus is externalized, and together, they shape a pore in the host membrane through which the viral genome is translocated into the host cell cytoplasm. Component of immature procapsids, which is cleaved into capsid proteins VP4 and VP2 after maturation. Allows the capsid to remain inactive before the maturation step. In terms of biological role, cysteine protease that cleaves viral polyprotein and specific host proteins. It is responsible for the autocatalytic cleavage between the P1 and P2 regions, which is the first cleavage occurring in the polyprotein. Also cleaves the host translation initiation factor EIF4G1, in order to shut down the capped cellular mRNA translation. Inhibits the host nucleus-cytoplasm protein and RNA trafficking by cleaving host members of the nuclear pores. Counteracts stress granule formation probably by antagonizing its assembly or promoting its dissassembly. Cleaves and inhibits host IFIH1/MDA5, thereby inhibiting the type-I IFN production and the establishment of the antiviral state. Cleaves and inhibits host MAVS, thereby inhibiting the type-I IFN production and the establishment of the antiviral state. Functionally, plays an essential role in the virus replication cycle by acting as a viroporin. Creates a pore in the host endoplasmic reticulum and as a consequence releases Ca2+ in the cytoplasm of infected cell. In turn, high levels of cytoplasmic calcium may trigger membrane trafficking and transport of viral ER-associated proteins to viroplasms, sites of viral genome replication. Its function is as follows. Induces and associates with structural rearrangements of intracellular membranes. Displays RNA-binding, nucleotide binding and NTPase activities. May play a role in virion morphogenesis and viral RNA encapsidation by interacting with the capsid protein VP3. Localizes the viral replication complex to the surface of membranous vesicles. Together with protein 3CD binds the Cis-Active RNA Element (CRE) which is involved in RNA synthesis initiation. Acts as a cofactor to stimulate the activity of 3D polymerase, maybe through a nucleid acid chaperone activity. In terms of biological role, localizes the viral replication complex to the surface of membranous vesicles. It inhibits host cell endoplasmic reticulum-to-Golgi apparatus transport and causes the disassembly of the Golgi complex, possibly through GBF1 interaction. This would result in depletion of MHC, trail receptors and IFN receptors at the host cell surface. Plays an essential role in viral RNA replication by recruiting ACBD3 and PI4KB at the viral replication sites, thereby allowing the formation of the rearranged membranous structures where viral replication takes place. Functionally, acts as a primer for viral RNA replication and remains covalently bound to viral genomic RNA. VPg is uridylylated prior to priming replication into VPg-pUpU. The oriI viral genomic sequence may act as a template for this. The VPg-pUpU is then used as primer on the genomic RNA poly(A) by the RNA-dependent RNA polymerase to replicate the viral genome. During genome replication, the VPg-RNA linkage is removed by the host TDP2, thereby accelerating replication. During the late stage of the replication cycle, host TDP2 is excluded from sites of viral RNA synthesis and encapsidation, allowing for the generation of progeny virions. Its function is as follows. Involved in the viral replication complex and viral polypeptide maturation. It exhibits protease activity with a specificity and catalytic efficiency that is different from protease 3C. Protein 3CD lacks polymerase activity. Protein 3CD binds to the 5'UTR of the viral genome. Replicates the viral genomic RNA on the surface of intracellular membranes. May form linear arrays of subunits that propagate along a strong head-to-tail interaction called interface-I. Covalently attaches UMP to a tyrosine of VPg, which is used to prime RNA synthesis. The positive stranded RNA genome is first replicated at virus induced membranous vesicles, creating a dsRNA genomic replication form. This dsRNA is then used as template to synthesize positive stranded RNA genomes. ss(+)RNA genomes are either translated, replicated or encapsidated. In terms of biological role, major viral protease that mediates proteolytic processing of the polyprotein. Cleaves host EIF5B, contributing to host translation shutoff. Also cleaves host PABPC1, contributing to host translation shutoff. Cleaves host NLRP1, triggers host N-glycine-mediated degradation of the autoinhibitory NLRP1 N-terminal fragment. This chain is Genome polyprotein, found in Coxsackievirus A9 (strain Griggs).